Consider the following 573-residue polypeptide: Oxygen sensor histidine kinase response regulator DosT (573 aa).

2 GAF domains span residues 61-198 (KLDA…GIAV) and 229-366 (DPAM…ALAW). Histidine 147 serves as a coordination point for heme. One can recognise a Histidine kinase domain in the interval 380 to 573 (ILTDRDRIAR…TLLRWSAPLR (194 aa)). Histidine 392 bears the Phosphohistidine; by autocatalysis mark.

Mg(2+) is required as a cofactor. The cofactor is heme.

The protein resides in the cytoplasm. Functionally, interacts with the two-component regulatory system DevR/DevS (DosR/DosS) involved in onset of the dormancy response. Required for full induction of the DevR (DosR) regulon; required during early adaptation to anaerobiosis, to start induction of the DevR regulon. May act as a direct hypoxia/oxygen sensor. May be the secondary sensor for CO. Donates a phosphate group to DevR (DosR). This chain is Oxygen sensor histidine kinase response regulator DosT (dosT), found in Mycobacterium tuberculosis (strain CDC 1551 / Oshkosh).